Here is a 240-residue protein sequence, read N- to C-terminus: Competence protein ComFC (240 aa).

It belongs to the ComF/GntX family. In terms of assembly, monomer and dimer in solution. Interacts with ComFA and DprA; ComFA-ComFC form rings about 150 Angstroms in diameter with apparent 6-fold symmetry.

Its function is as follows. Involved in transformation (genetic competence for DNA uptake). This is Competence protein ComFC (comFC) from Bacillus subtilis (strain 168).